The primary structure comprises 189 residues: Peptidyl-tRNA hydrolase (189 aa).

Tyr16 provides a ligand contact to tRNA. His21 acts as the Proton acceptor in catalysis. Residues Phe67, Asn69, and Asn115 each contribute to the tRNA site.

It belongs to the PTH family. Monomer.

It localises to the cytoplasm. It carries out the reaction an N-acyl-L-alpha-aminoacyl-tRNA + H2O = an N-acyl-L-amino acid + a tRNA + H(+). Functionally, hydrolyzes ribosome-free peptidyl-tRNAs (with 1 or more amino acids incorporated), which drop off the ribosome during protein synthesis, or as a result of ribosome stalling. Catalyzes the release of premature peptidyl moieties from peptidyl-tRNA molecules trapped in stalled 50S ribosomal subunits, and thus maintains levels of free tRNAs and 50S ribosomes. In Legionella pneumophila subsp. pneumophila (strain Philadelphia 1 / ATCC 33152 / DSM 7513), this protein is Peptidyl-tRNA hydrolase.